We begin with the raw amino-acid sequence, 388 residues long: Succinate--CoA ligase [ADP-forming] subunit beta (388 aa).

ATP-binding positions include lysine 46, 53 to 55 (GRG), glutamate 99, cysteine 102, and glutamate 107. Residues asparagine 199 and aspartate 213 each contribute to the Mg(2+) site. Residues asparagine 264 and 321–323 (GIV) each bind substrate.

This sequence belongs to the succinate/malate CoA ligase beta subunit family. In terms of assembly, heterotetramer of two alpha and two beta subunits. Requires Mg(2+) as cofactor.

It catalyses the reaction succinate + ATP + CoA = succinyl-CoA + ADP + phosphate. It carries out the reaction GTP + succinate + CoA = succinyl-CoA + GDP + phosphate. It participates in carbohydrate metabolism; tricarboxylic acid cycle; succinate from succinyl-CoA (ligase route): step 1/1. In terms of biological role, succinyl-CoA synthetase functions in the citric acid cycle (TCA), coupling the hydrolysis of succinyl-CoA to the synthesis of either ATP or GTP and thus represents the only step of substrate-level phosphorylation in the TCA. The beta subunit provides nucleotide specificity of the enzyme and binds the substrate succinate, while the binding sites for coenzyme A and phosphate are found in the alpha subunit. The chain is Succinate--CoA ligase [ADP-forming] subunit beta from Actinobacillus pleuropneumoniae serotype 3 (strain JL03).